The chain runs to 137 residues: Histone H2B (137 aa).

Basic and acidic residues predominate over residues 1-10 (MAPKAADKKP). The disordered stretch occupies residues 1–46 (MAPKAADKKPASKAPATASKAPEKKDAGKKTAASGDKKKRSKSRKE). An N6-acetyllysine; alternate mark is found at lysine 8 and lysine 9. Glycyl lysine isopeptide (Lys-Gly) (interchain with G-Cter in SUMO); alternate cross-links involve residues lysine 8 and lysine 9. Position 12 is a phosphoserine (serine 12). Lysine 13 carries the N6-acetyllysine modification. Lysine 24 carries the post-translational modification N6-acetyllysine; alternate. A Glycyl lysine isopeptide (Lys-Gly) (interchain with G-Cter in SUMO); alternate cross-link involves residue lysine 24. Lysine 25 participates in a covalent cross-link: Glycyl lysine isopeptide (Lys-Gly) (interchain with G-Cter in SUMO). Lysine 131 participates in a covalent cross-link: Glycyl lysine isopeptide (Lys-Gly) (interchain with G-Cter in ubiquitin).

Belongs to the histone H2B family. As to quaternary structure, the nucleosome is a histone octamer containing two molecules each of H2A, H2B, H3 and H4 assembled in one H3-H4 heterotetramer and two H2A-H2B heterodimers. The octamer wraps approximately 147 bp of DNA. Monoubiquitinated by the UBC2-BRE1 complex to form H2BK123ub1. H2BK123ub1 gives a specific tag for epigenetic transcriptional activation and is also prerequisite for H3K4me and H3K79me formation. H2BK123ub1 also modulates the formation of double-strand breaks during meiosis and is a prerequisite for DNA-damage checkpoint activation. Post-translationally, phosphorylated to form H2BS10ph during progression through meiotic prophase. May be correlated with chromosome condensation. In terms of processing, acetylated by GCN5 to form H2BK11ac and H2BK16ac. H2BK16ac can also be formed by ESA1. Acetylation of N-terminal lysines and particularly formation of H2BK11acK16ac has a positive effect on transcription. Sumoylation to form H2BK6su or H2BK7su, and probably also H2BK16su or H2BK17su, occurs preferentially near the telomeres and represses gene transcription.

It localises to the nucleus. It is found in the chromosome. Core component of nucleosome. Nucleosomes wrap and compact DNA into chromatin, limiting DNA accessibility to the cellular machineries which require DNA as a template. Histones thereby play a central role in transcription regulation, DNA repair, DNA replication and chromosomal stability. DNA accessibility is regulated via a complex set of post-translational modifications of histones, also called histone code, and nucleosome remodeling. The protein is Histone H2B (HTB1) of Gibberella zeae (strain ATCC MYA-4620 / CBS 123657 / FGSC 9075 / NRRL 31084 / PH-1) (Wheat head blight fungus).